A 274-amino-acid polypeptide reads, in one-letter code: Histone H1.1 (274 aa).

Disordered regions lie at residues 1–63 (MSEV…SSHP) and 129–155 (PSAS…PATV). Ser-2 carries the N-acetylserine modification. A compositionally biased stretch (low complexity) spans 16–25 (TAADAPVTDA). Residues 40–49 (NVKEVKEKKT) are compositionally biased toward basic and acidic residues. The 70-residue stretch at 61 to 130 (SHPTYEEMIK…KVKASFKLPS (70 aa)) folds into the H15 domain. Residues 129 to 145 (PSASAKASSPKAAAEKS) are compositionally biased toward low complexity. Lys-161 participates in a covalent cross-link: Glycyl lysine isopeptide (Lys-Gly) (interchain with G-Cter in ubiquitin). Disordered stretches follow at residues 167–233 (ASKA…PAKK) and 249–274 (KTPV…RVKK). Low complexity-rich tracts occupy residues 175–185 (AVKPKTAAAKK) and 221–233 (AAKT…PAKK).

The protein belongs to the histone H1/H5 family.

The protein resides in the nucleus. Its subcellular location is the chromosome. Its function is as follows. Histones H1 are necessary for the condensation of nucleosome chains into higher-order structures. The protein is Histone H1.1 of Arabidopsis thaliana (Mouse-ear cress).